The sequence spans 463 residues: Paraneoplastic antigen Ma3 (463 aa).

The interval 363 to 410 (VGAVPLPASGNSFDARPSQGYRRRRGRGQHRRGGVARAGSRGSRKRKR) is disordered. The segment covering 383-396 (YRRRRGRGQHRRGG) has biased composition (basic residues). The CCHC-type zinc-finger motif lies at 412–429 (TFCYSCGEDGHIRVQCIN). The segment at 440–463 (KQAAVESGNGNWAWDKSHPKSKAK) is disordered.

Belongs to the PNMA family. Expressed at high levels in the brain and testis. Expressed at lower levels in the heart, trachea and kidney.

The protein resides in the nucleus. It is found in the nucleolus. In Homo sapiens (Human), this protein is Paraneoplastic antigen Ma3 (PNMA3).